The following is a 219-amino-acid chain: 7-cyano-7-deazaguanine synthase (219 aa).

Residue 11–21 coordinates ATP; the sequence is FSGGQDSTTCL. Residues Cys-188, Cys-196, Cys-199, and Cys-202 each contribute to the Zn(2+) site.

It belongs to the QueC family. The cofactor is Zn(2+).

The catalysed reaction is 7-carboxy-7-deazaguanine + NH4(+) + ATP = 7-cyano-7-deazaguanine + ADP + phosphate + H2O + H(+). It participates in purine metabolism; 7-cyano-7-deazaguanine biosynthesis. Functionally, catalyzes the ATP-dependent conversion of 7-carboxy-7-deazaguanine (CDG) to 7-cyano-7-deazaguanine (preQ(0)). This chain is 7-cyano-7-deazaguanine synthase, found in Glaesserella parasuis serovar 5 (strain SH0165) (Haemophilus parasuis).